A 214-amino-acid polypeptide reads, in one-letter code: Cytochrome b (214 aa).

The next 4 helical transmembrane spans lie at 31–51, 75–96, 111–131, and 176–196; these read FGSM…FLAI, WIMQ…YIHI, WLSG…GYVL, and FFAL…AHIL. Heme b contacts are provided by X81 and H95. H180 and H194 together coordinate heme b. H199 lines the a ubiquinone pocket.

This sequence belongs to the cytochrome b family. The cytochrome bc1 complex contains 3 respiratory subunits (MT-CYB, CYC1 and UQCRFS1), 2 core proteins (UQCRC1 and UQCRC2) and probably 6 low-molecular weight proteins. Heme b serves as cofactor.

It is found in the mitochondrion inner membrane. Component of the ubiquinol-cytochrome c reductase complex (complex III or cytochrome b-c1 complex) that is part of the mitochondrial respiratory chain. The b-c1 complex mediates electron transfer from ubiquinol to cytochrome c. Contributes to the generation of a proton gradient across the mitochondrial membrane that is then used for ATP synthesis. This Bothriechis schlegelii (Eyelash palm pitviper) protein is Cytochrome b (MT-CYB).